Here is a 176-residue protein sequence, read N- to C-terminus: Tubulin polymerization-promoting protein family member 3 (176 aa).

The residue at position 2 (A2) is an N-acetylalanine.

This sequence belongs to the TPPP family.

It is found in the cytoplasm. The protein localises to the cytoskeleton. Regulator of microtubule dynamic that has microtubule bundling activity. Required for embryo implantation; possibly by regulating beta-catenin. Also required for decidualization via regulation of beta-catenin. In Rattus norvegicus (Rat), this protein is Tubulin polymerization-promoting protein family member 3 (Tppp3).